Consider the following 353-residue polypeptide: Photosystem II protein D1 (353 aa).

The residue at position 2 (Thr-2) is an N-acetylthreonine. Residue Thr-2 is modified to Phosphothreonine. A run of 3 helical transmembrane segments spans residues 29-46 (YIGWFGVLMIPTLLTATS), 118-133 (HFLLGVACYMGREWEL), and 142-156 (WIAVAYSAPVAAATA). His-118 provides a ligand contact to chlorophyll a. Tyr-126 contacts pheophytin a. Residues Asp-170 and Glu-189 each coordinate [CaMn4O5] cluster. The chain crosses the membrane as a helical span at residues 197–218 (FHMLGVAGVFGGSLFSAMHGSL). His-198 provides a ligand contact to chlorophyll a. Residues His-215 and 264 to 265 (SF) contribute to the a quinone site. A Fe cation-binding site is contributed by His-215. Position 272 (His-272) interacts with Fe cation. The helical transmembrane segment at 274–288 (FLAAWPVVGIWFTAL) threads the bilayer. The [CaMn4O5] cluster site is built by His-332, Glu-333, Asp-342, and Ala-344. Residues 345–353 (AVEVPSTNG) constitute a propeptide that is removed on maturation.

It belongs to the reaction center PufL/M/PsbA/D family. In terms of assembly, PSII is composed of 1 copy each of membrane proteins PsbA, PsbB, PsbC, PsbD, PsbE, PsbF, PsbH, PsbI, PsbJ, PsbK, PsbL, PsbM, PsbT, PsbX, PsbY, PsbZ, Psb30/Ycf12, at least 3 peripheral proteins of the oxygen-evolving complex and a large number of cofactors. It forms dimeric complexes. It depends on The D1/D2 heterodimer binds P680, chlorophylls that are the primary electron donor of PSII, and subsequent electron acceptors. It shares a non-heme iron and each subunit binds pheophytin, quinone, additional chlorophylls, carotenoids and lipids. D1 provides most of the ligands for the Mn4-Ca-O5 cluster of the oxygen-evolving complex (OEC). There is also a Cl(-1) ion associated with D1 and D2, which is required for oxygen evolution. The PSII complex binds additional chlorophylls, carotenoids and specific lipids. as a cofactor. Tyr-161 forms a radical intermediate that is referred to as redox-active TyrZ, YZ or Y-Z. Post-translationally, C-terminally processed by CTPA; processing is essential to allow assembly of the oxygen-evolving complex and thus photosynthetic growth.

It localises to the plastid. It is found in the chloroplast thylakoid membrane. The enzyme catalyses 2 a plastoquinone + 4 hnu + 2 H2O = 2 a plastoquinol + O2. In terms of biological role, photosystem II (PSII) is a light-driven water:plastoquinone oxidoreductase that uses light energy to abstract electrons from H(2)O, generating O(2) and a proton gradient subsequently used for ATP formation. It consists of a core antenna complex that captures photons, and an electron transfer chain that converts photonic excitation into a charge separation. The D1/D2 (PsbA/PsbD) reaction center heterodimer binds P680, the primary electron donor of PSII as well as several subsequent electron acceptors. The protein is Photosystem II protein D1 of Calycanthus floridus var. glaucus (Eastern sweetshrub).